Here is a 518-residue protein sequence, read N- to C-terminus: Xaa-Pro aminopeptidase 3 (518 aa).

The transit peptide at 1–48 directs the protein to the mitochondrion; that stretch reads MNNICKLNKFIISKSSSSLSSTSSKIKTNCLIKNAKMFSSSLNLNRFY. Residues Y314, D345, D356, H434, H441, E461, and E485 each contribute to the substrate site. Residues D345, D356, and H434 each coordinate Mn(2+). Mn(2+) is bound by residues E461 and E485.

The protein belongs to the peptidase M24B family. As to quaternary structure, homodimer. It depends on Mn(2+) as a cofactor.

The protein localises to the mitochondrion. It localises to the cytoplasm. The enzyme catalyses Release of any N-terminal amino acid, including proline, that is linked to proline, even from a dipeptide or tripeptide.. In terms of biological role, catalyzes the removal of a penultimate prolyl residue from the N-termini of peptides, such as Leu-Pro-Ala. Also shows low activity towards peptides with Ala or Ser at the P1 position. The protein is Xaa-Pro aminopeptidase 3 (xpnpep3) of Dictyostelium discoideum (Social amoeba).